The following is a 58-amino-acid chain: Transactivator protein ORF121 (58 aa).

Stimulates the expression of 39k gene most probably by increasing IE1 expression. This chain is Transactivator protein ORF121 (AC121), found in Lepidoptera (butterflies and moths).